We begin with the raw amino-acid sequence, 901 residues long: Alanine--tRNA ligase (901 aa).

Positions 581, 585, 684, and 688 each coordinate Zn(2+).

This sequence belongs to the class-II aminoacyl-tRNA synthetase family. Zn(2+) serves as cofactor.

It localises to the cytoplasm. The catalysed reaction is tRNA(Ala) + L-alanine + ATP = L-alanyl-tRNA(Ala) + AMP + diphosphate. Functionally, catalyzes the attachment of alanine to tRNA(Ala) in a two-step reaction: alanine is first activated by ATP to form Ala-AMP and then transferred to the acceptor end of tRNA(Ala). Also edits incorrectly charged Ser-tRNA(Ala) and Gly-tRNA(Ala) via its editing domain. This Mycobacterium marinum (strain ATCC BAA-535 / M) protein is Alanine--tRNA ligase.